We begin with the raw amino-acid sequence, 377 residues long: Succinyl-diaminopimelate desuccinylase (377 aa).

Zn(2+) is bound at residue H66. The active site involves D68. Residue D99 coordinates Zn(2+). Catalysis depends on E133, which acts as the Proton acceptor. Zn(2+)-binding residues include E134, E162, and H348.

The protein belongs to the peptidase M20A family. DapE subfamily. As to quaternary structure, homodimer. It depends on Zn(2+) as a cofactor. Requires Co(2+) as cofactor.

It catalyses the reaction N-succinyl-(2S,6S)-2,6-diaminopimelate + H2O = (2S,6S)-2,6-diaminopimelate + succinate. It participates in amino-acid biosynthesis; L-lysine biosynthesis via DAP pathway; LL-2,6-diaminopimelate from (S)-tetrahydrodipicolinate (succinylase route): step 3/3. Its function is as follows. Catalyzes the hydrolysis of N-succinyl-L,L-diaminopimelic acid (SDAP), forming succinate and LL-2,6-diaminopimelate (DAP), an intermediate involved in the bacterial biosynthesis of lysine and meso-diaminopimelic acid, an essential component of bacterial cell walls. This Marinomonas sp. (strain MWYL1) protein is Succinyl-diaminopimelate desuccinylase.